The chain runs to 445 residues: Methionine aminopeptidase 2-3 (445 aa).

Positions 14–115 (ISDADANGAD…ENRYRTTSEE (102 aa)) are disordered. Over residues 38–47 (EDDDSDDDVA) the composition is skewed to acidic residues. Residues 60–75 (AKKKKNKKRKPKKKQP) are compositionally biased toward basic residues. Polar residues predominate over residues 85–95 (PLSQLFPNNTY). Over residues 97–115 (KGEEVEYKDENRYRTTSEE) the composition is skewed to basic and acidic residues. His198 contacts substrate. Residues Asp218, Asp229, and His298 each contribute to the a divalent metal cation site. His306 is a binding site for substrate. A divalent metal cation contacts are provided by Glu331 and Glu426.

Belongs to the peptidase M24A family. Methionine aminopeptidase eukaryotic type 2 subfamily. Requires Co(2+) as cofactor. Zn(2+) serves as cofactor. Mn(2+) is required as a cofactor. The cofactor is Fe(2+).

Its subcellular location is the cytoplasm. The enzyme catalyses Release of N-terminal amino acids, preferentially methionine, from peptides and arylamides.. Its function is as follows. Cotranslationally removes the N-terminal methionine from nascent proteins. The N-terminal methionine is often cleaved when the second residue in the primary sequence is small and uncharged (Met-Ala-, Cys, Gly, Pro, Ser, Thr, or Val). This Neosartorya fischeri (strain ATCC 1020 / DSM 3700 / CBS 544.65 / FGSC A1164 / JCM 1740 / NRRL 181 / WB 181) (Aspergillus fischerianus) protein is Methionine aminopeptidase 2-3.